The following is a 523-amino-acid chain: Dynein regulatory complex subunit 3 (523 aa).

5 LRR repeats span residues aspartate 44–glutamate 65, asparagine 66–isoleucine 87, histidine 88–valine 109, asparagine 110–valine 131, and lysine 132–arginine 153. One can recognise an LRRCT domain in the interval asparagine 166 to lysine 204. Coiled-coil stretches lie at residues lysine 204 to glutamate 242 and leucine 333 to leucine 393.

The protein belongs to the DRC3 family. Component of the nexin-dynein regulatory complex (N-DRC). Interacts with DRC1. Interacts with TCTE1/DRC5. Interacts with DRC7.

The protein resides in the cytoplasm. It localises to the cytoskeleton. The protein localises to the cilium axoneme. It is found in the cell projection. Its subcellular location is the cilium. The protein resides in the flagellum axoneme. It localises to the flagellum. Component of the nexin-dynein regulatory complex (N-DRC) a key regulator of ciliary/flagellar motility which maintains the alignment and integrity of the distal axoneme and regulates microtubule sliding in motile axonemes. This Mus musculus (Mouse) protein is Dynein regulatory complex subunit 3 (Drc3).